The sequence spans 347 residues: Fructose-1,6-bisphosphatase (347 aa).

Residues 19–23 (ILQEQ) and 44–48 (SGELS) each bind AMP. The Mg(2+) site is built by D85 and E114. 127–128 (SY) contributes to the AMP binding site. Residues D133, I135, and D136 each contribute to the Mg(2+) site. A substrate-binding site is contributed by 136-139 (DGSS). Residue K155 participates in AMP binding. Residues 227–230 (NEGY), 258–263 (RYIGSM), Y279, and 288–290 (KLR) contribute to the substrate site. Residue E294 coordinates Mg(2+).

The protein belongs to the FBPase class 1 family. In terms of assembly, homotetramer. Mg(2+) is required as a cofactor.

It catalyses the reaction beta-D-fructose 1,6-bisphosphate + H2O = beta-D-fructose 6-phosphate + phosphate. The protein operates within carbohydrate biosynthesis; gluconeogenesis. Its activity is regulated as follows. Subject to complex allosteric regulation. The enzyme can assume an active R-state, or an inactive T-state. Intermediate conformations may exist. AMP acts as allosteric inhibitor. AMP binding affects the turnover of bound substrate and not the affinity for substrate. In Schizosaccharomyces pombe (strain 972 / ATCC 24843) (Fission yeast), this protein is Fructose-1,6-bisphosphatase (fbp1).